A 486-amino-acid chain; its full sequence is FAD-dependent oxidoreductase domain-containing protein 1 (486 aa).

Residues 66 to 86 (VVVVGGGVLGLSVAYWLKQLE) traverse the membrane as a helical segment.

As to quaternary structure, associates with components of the mitochondrial respiratory chain complex I. The cofactor is FAD.

The protein localises to the mitochondrion inner membrane. Required for the assembly of the mitochondrial membrane respiratory chain NADH dehydrogenase (Complex I). Involved in mid-late stages of complex I assembly. This Macaca fascicularis (Crab-eating macaque) protein is FAD-dependent oxidoreductase domain-containing protein 1 (FOXRED1).